Reading from the N-terminus, the 475-residue chain is Glycogen synthase (475 aa).

Residue K15 coordinates ADP-alpha-D-glucose.

This sequence belongs to the glycosyltransferase 1 family. Bacterial/plant glycogen synthase subfamily.

It carries out the reaction [(1-&gt;4)-alpha-D-glucosyl](n) + ADP-alpha-D-glucose = [(1-&gt;4)-alpha-D-glucosyl](n+1) + ADP + H(+). Its pathway is glycan biosynthesis; glycogen biosynthesis. Its function is as follows. Synthesizes alpha-1,4-glucan chains using ADP-glucose. This is Glycogen synthase from Anaeromyxobacter sp. (strain Fw109-5).